The following is a 130-amino-acid chain: Small ribosomal subunit protein uS9 (130 aa).

The protein belongs to the universal ribosomal protein uS9 family.

The chain is Small ribosomal subunit protein uS9 from Marinobacter nauticus (strain ATCC 700491 / DSM 11845 / VT8) (Marinobacter aquaeolei).